Consider the following 307-residue polypeptide: D-alanine--D-alanine ligase (307 aa).

Residues 105–304 (KMLWKGFGLP…FEQLVVKILE (200 aa)) form the ATP-grasp domain. 135-190 (VERLGLPLMVKPSREGSSVGLTKVNAVEELKNAVDLALTHDDTVLIEEWLSGIEMT) contributes to the ATP binding site. Asp258, Glu271, and Asn273 together coordinate Mg(2+).

It belongs to the D-alanine--D-alanine ligase family. The cofactor is Mg(2+). It depends on Mn(2+) as a cofactor.

The protein localises to the cytoplasm. The catalysed reaction is 2 D-alanine + ATP = D-alanyl-D-alanine + ADP + phosphate + H(+). It participates in cell wall biogenesis; peptidoglycan biosynthesis. In terms of biological role, cell wall formation. The sequence is that of D-alanine--D-alanine ligase from Mannheimia succiniciproducens (strain KCTC 0769BP / MBEL55E).